Here is an 852-residue protein sequence, read N- to C-terminus: Envelope glycoprotein gp160 (852 aa).

Residues 1–31 (MRARETRKNYQCLWRWGTMLLGMLMICSAAE) form the signal peptide. Residues 32-680 (NLWVTVYYGV…ITNWLWYIRI (649 aa)) are Extracellular-facing. A disulfide bridge connects residues Cys53 and Cys73. N-linked (GlcNAc...) asparagine; by host glycosylation is found at Asn87, Asn129, Asn136, Asn141, Asn142, Asn155, Asn159, Asn189, and Asn198. Intrachain disulfides connect Cys118/Cys206, Cys125/Cys197, Cys130/Cys156, Cys219/Cys248, and Cys229/Cys240. The tract at residues 130–155 (CTDYLGNATNTNNSSGGTVEKEEIKN) is V1. The interval 156–197 (CSFNITTGIRDKVQKAYAYFYKLDVVPIDDDNTNTSYRLIHC) is V2. 5 N-linked (GlcNAc...) asparagine; by host glycosylation sites follow: Asn242, Asn263, Asn277, Asn290, and Asn296. The segment at 297–330 (CTRPNNNRRRRITSGPGKVLYTTGEIIGDIRKAY) is V3. A disulfide bond links Cys297 and Cys331. N-linked (GlcNAc...) asparagine; by host glycosylation is found at Asn332, Asn339, and Asn355. A CD4-binding loop region spans residues 363–373 (SSGGDPEIVMH). 2 disulfides stabilise this stretch: Cys377–Cys439 and Cys384–Cys412. The segment at 384–412 (CNTTKLFNSTWNENSTWNATGNDTITLPC) is V4. 7 N-linked (GlcNAc...) asparagine; by host glycosylation sites follow: Asn385, Asn391, Asn397, Asn401, Asn405, Asn442, and Asn457. V5 regions lie at residues 455 to 466 (DKNSTTEIFRPA) and 457 to 466 (NSTTEIFRPA). The segment at 507–528 (AVGVIGAMFLGFLGAAGSTMGA) is fusion peptide. The immunosuppression stretch occupies residues 570 to 588 (KQLQARVLAVERYLRDQQL). Cys594 and Cys600 are oxidised to a cystine. 4 N-linked (GlcNAc...) asparagine; by host glycosylation sites follow: Asn607, Asn612, Asn621, and Asn633. Residues 629-663 (REIDNYTSLIYTLLEESQNQQEKNEQELLELDKWA) are a coiled coil. The segment at 658 to 679 (ELDKWASLWNWFSITNWLWYIR) is MPER; binding to GalCer. Residues 681–701 (FIMIVGGLIGLRIIFAVLSIV) form a helical membrane-spanning segment. Residues 702–852 (NRVRQGYSPL…IRQGFERALL (151 aa)) are Cytoplasmic-facing. Positions 708–711 (YSPL) match the YXXL motif; contains endocytosis signal motif. The segment at 717 to 739 (IPAQRGPDRPEGIEEGGGERDRD) is disordered. The span at 722-739 (GPDRPEGIEEGGGERDRD) shows a compositional bias: basic and acidic residues. The S-palmitoyl cysteine; by host moiety is linked to residue Cys760. The Di-leucine internalization motif motif lies at 851–852 (LL).

The protein belongs to the HIV-1 env protein family. The mature envelope protein (Env) consists of a homotrimer of non-covalently associated gp120-gp41 heterodimers. The resulting complex protrudes from the virus surface as a spike. There seems to be as few as 10 spikes on the average virion. Interacts with host CD4, CCR5 and CXCR4. Gp120 also interacts with the C-type lectins CD209/DC-SIGN and CLEC4M/DC-SIGNR (collectively referred to as DC-SIGN(R)). Gp120 and gp41 interact with GalCer. Gp120 interacts with host ITGA4/ITGB7 complex; on CD4+ T-cells, this interaction results in rapid activation of integrin ITGAL/LFA-1, which facilitates efficient cell-to-cell spreading of HIV-1. Gp120 interacts with cell-associated heparan sulfate; this interaction increases virus infectivity on permissive cells and may be involved in infection of CD4- cells. As to quaternary structure, the mature envelope protein (Env) consists of a homotrimer of non-covalently associated gp120-gp41 heterodimers. The resulting complex protrudes from the virus surface as a spike. There seems to be as few as 10 spikes on the average virion. Post-translationally, highly glycosylated by host. The high number of glycan on the protein is reffered to as 'glycan shield' because it contributes to hide protein sequence from adaptive immune system. In terms of processing, palmitoylation of the transmembrane protein and of Env polyprotein (prior to its proteolytic cleavage) is essential for their association with host cell membrane lipid rafts. Palmitoylation is therefore required for envelope trafficking to classical lipid rafts, but not for viral replication. Specific enzymatic cleavages in vivo yield mature proteins. Envelope glycoproteins are synthesized as an inactive precursor that is heavily N-glycosylated and processed likely by host cell furin in the Golgi to yield the mature SU and TM proteins. The cleavage site between SU and TM requires the minimal sequence [KR]-X-[KR]-R. About 2 of the 9 disulfide bonds of gp41 are reduced by P4HB/PDI, following binding to CD4 receptor.

The protein resides in the virion membrane. Its subcellular location is the host cell membrane. It localises to the host endosome membrane. Functionally, oligomerizes in the host endoplasmic reticulum into predominantly trimers. In a second time, gp160 transits in the host Golgi, where glycosylation is completed. The precursor is then proteolytically cleaved in the trans-Golgi and thereby activated by cellular furin or furin-like proteases to produce gp120 and gp41. Its function is as follows. Attaches the virus to the host lymphoid cell by binding to the primary receptor CD4. This interaction induces a structural rearrangement creating a high affinity binding site for a chemokine coreceptor like CXCR4 and/or CCR5. Acts as a ligand for CD209/DC-SIGN and CLEC4M/DC-SIGNR, which are respectively found on dendritic cells (DCs), and on endothelial cells of liver sinusoids and lymph node sinuses. These interactions allow capture of viral particles at mucosal surfaces by these cells and subsequent transmission to permissive cells. HIV subverts the migration properties of dendritic cells to gain access to CD4+ T-cells in lymph nodes. Virus transmission to permissive T-cells occurs either in trans (without DCs infection, through viral capture and transmission), or in cis (following DCs productive infection, through the usual CD4-gp120 interaction), thereby inducing a robust infection. In trans infection, bound virions remain infectious over days and it is proposed that they are not degraded, but protected in non-lysosomal acidic organelles within the DCs close to the cell membrane thus contributing to the viral infectious potential during DCs' migration from the periphery to the lymphoid tissues. On arrival at lymphoid tissues, intact virions recycle back to DCs' cell surface allowing virus transmission to CD4+ T-cells. In terms of biological role, acts as a class I viral fusion protein. Under the current model, the protein has at least 3 conformational states: pre-fusion native state, pre-hairpin intermediate state, and post-fusion hairpin state. During fusion of viral and target intracellular membranes, the coiled coil regions (heptad repeats) assume a trimer-of-hairpins structure, positioning the fusion peptide in close proximity to the C-terminal region of the ectodomain. The formation of this structure appears to drive apposition and subsequent fusion of viral and target cell membranes. Complete fusion occurs in host cell endosomes and is dynamin-dependent, however some lipid transfer might occur at the plasma membrane. The virus undergoes clathrin-dependent internalization long before endosomal fusion, thus minimizing the surface exposure of conserved viral epitopes during fusion and reducing the efficacy of inhibitors targeting these epitopes. Membranes fusion leads to delivery of the nucleocapsid into the cytoplasm. The protein is Envelope glycoprotein gp160 of Human immunodeficiency virus type 1 group M subtype B (isolate SF33) (HIV-1).